Reading from the N-terminus, the 511-residue chain is Xylose import ATP-binding protein XylG (511 aa).

2 consecutive ABC transporter domains span residues 6 to 244 and 261 to 506; these read LEMR…VGRE and FEAR…IGKP.

This sequence belongs to the ABC transporter superfamily. Xylose importer (TC 3.A.1.2.4) family. The complex is composed of two ATP-binding proteins (XylG), two transmembrane proteins (XylH) and a solute-binding protein (XylF).

It is found in the cell inner membrane. The enzyme catalyses D-xylose(out) + ATP + H2O = D-xylose(in) + ADP + phosphate + H(+). In terms of biological role, part of the ABC transporter complex XylFGH involved in xylose import. Responsible for energy coupling to the transport system. The sequence is that of Xylose import ATP-binding protein XylG from Brucella melitensis biotype 1 (strain ATCC 23456 / CCUG 17765 / NCTC 10094 / 16M).